Consider the following 205-residue polypeptide: Urease accessory protein UreG (205 aa).

Position 14 to 21 (14 to 21 (GPVGSGKT)) interacts with GTP.

It belongs to the SIMIBI class G3E GTPase family. UreG subfamily. Homodimer. UreD, UreF and UreG form a complex that acts as a GTP-hydrolysis-dependent molecular chaperone, activating the urease apoprotein by helping to assemble the nickel containing metallocenter of UreC. The UreE protein probably delivers the nickel.

The protein resides in the cytoplasm. Functionally, facilitates the functional incorporation of the urease nickel metallocenter. This process requires GTP hydrolysis, probably effectuated by UreG. This chain is Urease accessory protein UreG, found in Citrobacter koseri (strain ATCC BAA-895 / CDC 4225-83 / SGSC4696).